A 423-amino-acid polypeptide reads, in one-letter code: 3-phosphoshikimate 1-carboxyvinyltransferase (423 aa).

3-phosphoshikimate is bound by residues lysine 21, serine 22, and arginine 26. Lysine 21 serves as a coordination point for phosphoenolpyruvate. Positions 92 and 120 each coordinate phosphoenolpyruvate. Positions 164, 166, 312, and 339 each coordinate 3-phosphoshikimate. Residue glutamine 166 coordinates phosphoenolpyruvate. The active-site Proton acceptor is the aspartate 312. Residues arginine 343 and arginine 385 each contribute to the phosphoenolpyruvate site.

It belongs to the EPSP synthase family. Monomer.

The protein localises to the cytoplasm. It carries out the reaction 3-phosphoshikimate + phosphoenolpyruvate = 5-O-(1-carboxyvinyl)-3-phosphoshikimate + phosphate. It participates in metabolic intermediate biosynthesis; chorismate biosynthesis; chorismate from D-erythrose 4-phosphate and phosphoenolpyruvate: step 6/7. In terms of biological role, catalyzes the transfer of the enolpyruvyl moiety of phosphoenolpyruvate (PEP) to the 5-hydroxyl of shikimate-3-phosphate (S3P) to produce enolpyruvyl shikimate-3-phosphate and inorganic phosphate. The protein is 3-phosphoshikimate 1-carboxyvinyltransferase of Thermoanaerobacter pseudethanolicus (strain ATCC 33223 / 39E) (Clostridium thermohydrosulfuricum).